A 227-amino-acid polypeptide reads, in one-letter code: ATP synthase F(0) complex subunit a (227 aa).

The next 6 helical transmembrane spans lie at 12-32 (PYLMGMPLILPSLLLPTLLFP), 69-89 (WALLLTSLILLLLSINLMGLL), 98-118 (QLSMNMALAFPLWLATLLIGL), 139-159 (IPILIMIETTSLLIRPLALGV), 170-190 (LLIQLISTATIALLPTMPSIS), and 196-216 (ILLLLTILEVAVAMIQAYVFV).

Belongs to the ATPase A chain family. Component of the ATP synthase complex composed at least of ATP5F1A/subunit alpha, ATP5F1B/subunit beta, ATP5MC1/subunit c (homooctomer), MT-ATP6/subunit a, MT-ATP8/subunit 8, ATP5ME/subunit e, ATP5MF/subunit f, ATP5MG/subunit g, ATP5MK/subunit k, ATP5MJ/subunit j, ATP5F1C/subunit gamma, ATP5F1D/subunit delta, ATP5F1E/subunit epsilon, ATP5PF/subunit F6, ATP5PB/subunit b, ATP5PD/subunit d, ATP5PO/subunit OSCP. ATP synthase complex consists of a soluble F(1) head domain (subunits alpha(3) and beta(3)) - the catalytic core - and a membrane F(0) domain - the membrane proton channel (subunits c, a, 8, e, f, g, k and j). These two domains are linked by a central stalk (subunits gamma, delta, and epsilon) rotating inside the F1 region and a stationary peripheral stalk (subunits F6, b, d, and OSCP). Interacts with DNAJC30; interaction is direct.

Its subcellular location is the mitochondrion inner membrane. It carries out the reaction H(+)(in) = H(+)(out). Its function is as follows. Subunit a, of the mitochondrial membrane ATP synthase complex (F(1)F(0) ATP synthase or Complex V) that produces ATP from ADP in the presence of a proton gradient across the membrane which is generated by electron transport complexes of the respiratory chain. ATP synthase complex consist of a soluble F(1) head domain - the catalytic core - and a membrane F(1) domain - the membrane proton channel. These two domains are linked by a central stalk rotating inside the F(1) region and a stationary peripheral stalk. During catalysis, ATP synthesis in the catalytic domain of F(1) is coupled via a rotary mechanism of the central stalk subunits to proton translocation. With the subunit c (ATP5MC1), forms the proton-conducting channel in the F(0) domain, that contains two crucial half-channels (inlet and outlet) that facilitate proton movement from the mitochondrial intermembrane space (IMS) into the matrix. Protons are taken up via the inlet half-channel and released through the outlet half-channel, following a Grotthuss mechanism. The polypeptide is ATP synthase F(0) complex subunit a (Coturnix japonica (Japanese quail)).